An 895-amino-acid polypeptide reads, in one-letter code: Probable inorganic carbon transporter subunit DabA 1 (895 aa).

Positions 398, 400, 581, and 596 each coordinate Zn(2+).

It belongs to the inorganic carbon transporter (TC 9.A.2) DabA family. Forms a complex with DabB. Zn(2+) is required as a cofactor.

It is found in the cell inner membrane. In terms of biological role, part of an energy-coupled inorganic carbon pump. This Rhodopirellula baltica (strain DSM 10527 / NCIMB 13988 / SH1) protein is Probable inorganic carbon transporter subunit DabA 1.